Here is a 447-residue protein sequence, read N- to C-terminus: Chitobiosyldiphosphodolichol beta-mannosyltransferase (447 aa).

Over 1–8 (MSVFGFDN) the chain is Lumenal. Residues 9-29 (IPTWLWWLLAIYLATPFVLYV) traverse the membrane as a helical segment. Topologically, residues 30–127 (VQPYLFYEGK…LCSMFWKLRA (98 aa)) are cytoplasmic. An intramembrane region (helical) is located at residues 128-148 (VDYILLQNPPTIPILPIAVVV). Topologically, residues 149–447 (KTFSRAKLII…ALSELKIIHK (299 aa)) are lumenal.

This sequence belongs to the glycosyltransferase group 1 family.

It is found in the endoplasmic reticulum membrane. It catalyses the reaction an N,N'-diacetylchitobiosyl-diphospho-di-trans,poly-cis-dolichol + GDP-alpha-D-mannose = a beta-D-Man-(1-&gt;4)-beta-D-GlcNAc-(1-&gt;4)-alpha-D-GlcNAc-diphospho-di-trans,poly-cis-dolichol + GDP + H(+). Its pathway is protein modification; protein glycosylation. Functionally, participates in the formation of the lipid-linked precursor oligosaccharide for N-glycosylation. Involved in assembling the dolichol-pyrophosphate-GlcNAc(2)-Man(5) intermediate on the cytoplasmic surface of the ER. This is Chitobiosyldiphosphodolichol beta-mannosyltransferase (ALG1) from Kluyveromyces lactis (strain ATCC 8585 / CBS 2359 / DSM 70799 / NBRC 1267 / NRRL Y-1140 / WM37) (Yeast).